The following is a 928-amino-acid chain: MKIKDTLNMGKTSFPMRAGLPKNEPIWQKKWDEDHVYEQRQKLNEGKPTFMLHDGPPFANGNIHMGHALNKISKDIIVRYKSMNGFRAPYVPGWDTHGLPIEQQLAKQGVKRKEMSMTDYRELCRQFAMQEIDKQRTDFKRLGVMGDWEHPYITLQHHYEASEIRVFGAMAKKGYIYHGLKPVYWSWSSESTLAEAEIEYHDDKSPSIYVAFKVVDGKGLLDTDTYLVIWTTTPWTIPANYGITVNPRFDYVQVQVGDKKYVVAAELLDRVAEEIGWENPKILKTFKGTDMDKMTAQHPLYDRTSLVMNADHVTLDAGTGLVHTAPGHGEDDYKVGVKYGLPVVSVVDAKGYMNEYAPGFEGVFYDDANKQITQALADKGALLKLDFFTHSYPHDWRTKKPVIFRATTQWFASIDAFRDQILKAIDTVDFKPSWGKTRLYNMIRDRGDWVISRQRAWGVPLPIFYAEDGEPIIEEETINHVADLFGKYGSNVWFEREAKDLLPEGYTNPHSPNGQFTKEKDIMDVWFDSGSSHQAVLAARPELSFPADLYLEGSDQYRGWFNSSLITSVAATGVAPYRGILSQGFTLDGKGRKMSKSLGNTIVPATIEKQFGAEIIRLWVATVDSSSDVRVSVDNFAQTSEAYRKIRNTMRFMVANTGDFDPEKDTVAYDELGSVDRYMMVRLNQIIKQVKTAYDAYDFATVEKTISSFLVNDLSAFYLDVAKDVVYIEAKDDPKRRGMQTVMFAALLTVTKLITPILPHTAEEVWPYLKQPEAYAALADMPEAEQFDDESQLLDIWSGFMDFRSEVQKALELARDNKVIGKSLEAAVTVYPSEPVRDMLDDVDANVMQLLITSHFEIAPATTKAPADAEQFDDMAVVVKHADGEVCPRCRMVRTDIGTDPKLPQLCSRCAAIVEANFPDAVTNGFDK.

Residues 57–67 (PFANGNIHMGH) carry the 'HIGH' region motif. E552 contributes to the L-isoleucyl-5'-AMP binding site. The 'KMSKS' region signature appears at 593–597 (KMSKS). K596 contributes to the ATP binding site. Residues C887, C890, C907, and C910 each coordinate Zn(2+).

This sequence belongs to the class-I aminoacyl-tRNA synthetase family. IleS type 1 subfamily. As to quaternary structure, monomer. Zn(2+) is required as a cofactor.

It is found in the cytoplasm. It carries out the reaction tRNA(Ile) + L-isoleucine + ATP = L-isoleucyl-tRNA(Ile) + AMP + diphosphate. Functionally, catalyzes the attachment of isoleucine to tRNA(Ile). As IleRS can inadvertently accommodate and process structurally similar amino acids such as valine, to avoid such errors it has two additional distinct tRNA(Ile)-dependent editing activities. One activity is designated as 'pretransfer' editing and involves the hydrolysis of activated Val-AMP. The other activity is designated 'posttransfer' editing and involves deacylation of mischarged Val-tRNA(Ile). The protein is Isoleucine--tRNA ligase of Lacticaseibacillus casei (strain BL23) (Lactobacillus casei).